The primary structure comprises 345 residues: Small ribosomal subunit protein mS45 (345 aa).

The transit peptide at 1 to 27 (MSYGLTGTSSKLRGTSSIFSWTQVRHF) directs the protein to the mitochondrion.

This sequence belongs to the mitochondrion-specific ribosomal protein mS45 family. Component of the mitochondrial small ribosomal subunit (mt-SSU). Mature yeast 74S mitochondrial ribosomes consist of a small (37S) and a large (54S) subunit. The 37S small subunit contains a 15S ribosomal RNA (15S mt-rRNA) and 34 different proteins. The 54S large subunit contains a 21S rRNA (21S mt-rRNA) and 46 different proteins.

It localises to the mitochondrion. Functionally, component of the mitochondrial ribosome (mitoribosome), a dedicated translation machinery responsible for the synthesis of mitochondrial genome-encoded proteins, including at least some of the essential transmembrane subunits of the mitochondrial respiratory chain. The mitoribosomes are attached to the mitochondrial inner membrane and translation products are cotranslationally integrated into the membrane. In Saccharomyces cerevisiae (strain ATCC 204508 / S288c) (Baker's yeast), this protein is Small ribosomal subunit protein mS45 (MRPS35).